The chain runs to 445 residues: POU domain, class 3, transcription factor 2 (445 aa).

Disordered regions lie at residues 64 to 173 (ALSH…WRSA) and 203 to 269 (LGAG…TPTS). Positions 67–90 (HGGGGGGGGGGGGGGGGGGGGGDG) are enriched in gly residues. 2 stretches are compositionally biased toward low complexity: residues 125–151 (QQQH…QQQQ) and 163–173 (HHPGPGAWRSA). The segment covering 217–226 (LRDAHDEPHH) has biased composition (basic and acidic residues). The span at 227–237 (ADHHPHPHSHP) shows a compositional bias: basic residues. Residues 239-253 (QQPPPPPPPQGPPGH) show a composition bias toward pro residues. The POU-specific domain maps to 264–338 (EDTPTSDDLE…LLNKWLEEAD (75 aa)). Ser343 carries the post-translational modification Phosphoserine. Positions 356-415 (KRKKRTSIEVSVKGALESHFLKCPKPSAQEITSLADSLQLEKEVVRVWFCNRRQKEKRMT) form a DNA-binding region, homeobox. Residues 411-445 (EKRMTPPGGTLPGAEDVYGGSRDTPPHHGVQTPVQ) are disordered.

The protein belongs to the POU transcription factor family. Class-3 subfamily. In terms of assembly, interacts with PQBP1. Interaction with ISL1. In terms of tissue distribution, expressed specifically in the neuroectodermal cell lineage.

Its subcellular location is the nucleus. Its function is as follows. Transcription factor that plays a key role in neuronal differentiation. Binds preferentially to the recognition sequence which consists of two distinct half-sites, ('GCAT') and ('TAAT'), separated by a non-conserved spacer region of 0, 2, or 3 nucleotides. Acts as a transcriptional activator when binding cooperatively with SOX4, SOX11, or SOX12 to gene promoters. The combination of three transcription factors, ASCL1, POU3F2/BRN2 and MYT1L, is sufficient to reprogram fibroblasts and other somatic cells into induced neuronal (iN) cells in vitro. Acts downstream of ASCL1, accessing chromatin that has been opened by ASCL1, and promotes transcription of neuronal genes. The chain is POU domain, class 3, transcription factor 2 (Pou3f2) from Mus musculus (Mouse).